The chain runs to 292 residues: tRNA pseudouridine synthase B (292 aa).

Aspartate 38 acts as the Nucleophile in catalysis.

The protein belongs to the pseudouridine synthase TruB family. Type 1 subfamily.

The enzyme catalyses uridine(55) in tRNA = pseudouridine(55) in tRNA. Responsible for synthesis of pseudouridine from uracil-55 in the psi GC loop of transfer RNAs. This Streptococcus sanguinis (strain SK36) protein is tRNA pseudouridine synthase B.